The primary structure comprises 153 residues: MGNCCSFLFNNSDDIDEQTPLLNNDGIQRTPPSAEADMSLRKREEEEEWESKVYDVAKNKFIDVFSLRLRTEAPQRDPRDNIYEEVLDQIDSLNLDPKYDVAKPTEQETEFIIRKLGVLIDDINNIKLSDKEIKGKMVINLSKVQPNITGSPS.

Residues 16–40 are disordered; it reads DEQTPLLNNDGIQRTPPSAEADMSL. Polar residues predominate over residues 20 to 31; the sequence is PLLNNDGIQRTP.

This is an uncharacterized protein from Schizosaccharomyces pombe (strain 972 / ATCC 24843) (Fission yeast).